We begin with the raw amino-acid sequence, 1511 residues long: MSSTDEHIEKDISSRSNHDDDYANSVQSYAASEGQVDNEDLAATSQLSRHLSNILSNEEGIERLESMARVISHKTKKEMDSFEINDLDFDLRSLLHYLRSRQLEQGIEPGDSGIAFKNLTAVGVDASAAYGPSVEEMFRNIASIPAHLISKFTKKSDVPLRNIIQNCTGVVESGEMLFVVGRPGAGCSTFLKCLSGETSELVDVQGEFSYDGLDQSEMMSKYKGYVIYCPELDFHFPKITVKETIDFALKCKTPRVRIDKMTRKQYVDNIRDMWCTVFGLRHTYATKVGNDFVRGVSGGERKRVSLVEAQAMNASIYSWDNATRGLDASTALEFAQAIRTATNMVNNSAIVAIYQAGENIYELFDKTTVLYNGRQIYFGPADKAVGYFQRMGWVKPNRMTSAEFLTSVTVDFENRTLDIKPGYEDKVPKSSSEFEEYWLNSEDYQELLRTYDDYQSRHPVNETRDRLDVAKKQRLQQGQRENSQYVVNYWTQVYYCMIRGFQRVKGDSTYTKVYLSSFLIKALIIGSMFHKIDDKSQSTTAGAYSRGGMLFYVLLFASVTSLAEIGNSFSSRPVIVKHKSYSMYHLSAESLQEIITEFPTKFVAIVILCLITYWIPFMKYEAGAFFQYILYLLTVQQCTSFIFKFVATMSKSGVDAHAVGGLWVLMLCVYAGFVLPIGEMHHWIRWLHFINPLTYAFESLVSTEFHHREMLCSALVPSGPGYEGISIANQVCDAAGAVKGNLYVSGDSYILHQYHFAYKHAWRNWGVNIVWTFGYIVFNVILSEYLKPVEGGGDLLLYKRGHMPELGTENADARTASREEMMEALNGPNVDLEKVIAEKDVFTWNHLDYTIPYDGATRKLLSDVFGYVKPGKMTALMGESGAGKTTLLNVLAQRINMGVITGDMLVNAKPLPASFNRSCGYVAQADNHMAELSVRESLRFAAELRQQSSVPLEEKYEYVEKIITLLGMQNYAEALVGKTGRGLNVEQRKKLSIGVELVAKPSLLLFLDEPTSGLDSQSAWSIVQFMRALADSGQSILCTIHQPSATLFEQFDRLLLLKKGGKMVYFGDIGPNSETLLKYFERQSGMKCGVSENPAEYILNCIGAGATASVNSDWHDLWLASPECAAARAEVEELHRTLPGRAVNDDPELATRFAASYMTQIKCVLRRTALQFWRSPVYIRAKFFECVACALFVGLSYVGVNHSVGGAIEAFSSIFMLLLIALAMINQLHVFAYDSRELYEVREAASNTFHWSVLLLCHAAVENFWSTLCQFMCFICYYWPAQFSGRASHAGFFFFFYVLIFPLYFVTYGLWILYMSPDVPSASMINSNLFAAMLLFCGILQPREKMPAFWRRLMYNVSPFTYVVQALVTPLVHNKKVVCNPHEYNIMDPPSGKTCGEFLSTYMDNNTGYLVNPTATENCQYCPYTVQDQVVAKYNVKWDHRWRNFGFMWAYICFNIAAMLICYYVVRVKVWSLKSVLNFKKWFNGPRKERHEKDTNIFQTVPGDENKITKK.

Residues 1–21 (MSSTDEHIEKDISSRSNHDDD) show a composition bias toward basic and acidic residues. The disordered stretch occupies residues 1–37 (MSSTDEHIEKDISSRSNHDDDYANSVQSYAASEGQVD). The residue at position 2 (S2) is an N-acetylserine. The Cytoplasmic segment spans residues 2–508 (SSTDEHIEKD…RGFQRVKGDS (507 aa)). Residues S32, S52, and S56 each carry the phosphoserine modification. The region spanning 144–397 (IPAHLISKFT…FQRMGWVKPN (254 aa)) is the ABC transporter 1 domain. Residue K426 forms a Glycyl lysine isopeptide (Lys-Gly) (interchain with G-Cter in ubiquitin) linkage. A helical membrane pass occupies residues 509-529 (TYTKVYLSSFLIKALIIGSMF). Topologically, residues 530–548 (HKIDDKSQSTTAGAYSRGG) are extracellular. A helical transmembrane segment spans residues 549 to 569 (MLFYVLLFASVTSLAEIGNSF). The Cytoplasmic segment spans residues 570-597 (SSRPVIVKHKSYSMYHLSAESLQEIITE). A helical transmembrane segment spans residues 598-618 (FPTKFVAIVILCLITYWIPFM). At 619–622 (KYEA) the chain is on the extracellular side. Residues 623-643 (GAFFQYILYLLTVQQCTSFIF) form a helical membrane-spanning segment. The Cytoplasmic segment spans residues 644 to 657 (KFVATMSKSGVDAH). A helical membrane pass occupies residues 658 to 678 (AVGGLWVLMLCVYAGFVLPIG). At 679–765 (EMHHWIRWLH…FAYKHAWRNW (87 aa)) the chain is on the extracellular side. Residues 766–786 (GVNIVWTFGYIVFNVILSEYL) form a helical membrane-spanning segment. Residues 787-1182 (KPVEGGGDLL…WRSPVYIRAK (396 aa)) are Cytoplasmic-facing. The 249-residue stretch at 836-1084 (IAEKDVFTWN…TLLKYFERQS (249 aa)) folds into the ABC transporter 2 domain. Residues 878–885 (GESGAGKT) and 972–979 (AEALVGKT) each bind ATP. A helical transmembrane segment spans residues 1183–1203 (FFECVACALFVGLSYVGVNHS). V1204 is a topological domain (extracellular). Residues 1205 to 1225 (GGAIEAFSSIFMLLLIALAMI) traverse the membrane as a helical segment. The Cytoplasmic segment spans residues 1226-1254 (NQLHVFAYDSRELYEVREAASNTFHWSVL). A helical transmembrane segment spans residues 1255 to 1275 (LLCHAAVENFWSTLCQFMCFI). Over 1276–1291 (CYYWPAQFSGRASHAG) the chain is Extracellular. Residues 1292-1312 (FFFFFYVLIFPLYFVTYGLWI) form a helical membrane-spanning segment. The Cytoplasmic segment spans residues 1313 to 1318 (LYMSPD). The chain crosses the membrane as a helical span at residues 1319–1339 (VPSASMINSNLFAAMLLFCGI). Residues 1340-1444 (LQPREKMPAF…NVKWDHRWRN (105 aa)) are Extracellular-facing. The N-linked (GlcNAc...) asparagine glycan is linked to N1405. A helical membrane pass occupies residues 1445–1465 (FGFMWAYICFNIAAMLICYYV). The Cytoplasmic segment spans residues 1466-1511 (VRVKVWSLKSVLNFKKWFNGPRKERHEKDTNIFQTVPGDENKITKK).

The protein belongs to the ABC transporter superfamily. ABCG family. PDR (TC 3.A.1.205) subfamily.

The protein localises to the cell membrane. Plasma membrane transporter which mediates resistance to water-soluble, monocarboxylic acids with chain lengths of from C1 to C7 by active extrusion of the preservative anions from the cytosol. Also involved in the export of aromatic and branched-chain organic acids produced in amino acid catabolism. The sequence is that of ATP-dependent permease PDR12 (PDR12) from Saccharomyces cerevisiae (strain ATCC 204508 / S288c) (Baker's yeast).